Reading from the N-terminus, the 794-residue chain is Putative neurotrophin receptor LTRK 1 (794 aa).

An N-terminal signal peptide occupies residues 1-33; sequence MRGPRRFRLWTRANVLTVISILTSILSGAGCSP. The Extracellular segment spans residues 34–419; the sequence is LSQLPSDNPA…PTEDFGPQTQ (386 aa). The interval 36-102 is disordered; sequence QLPSDNPAHV…DQVPGDASRN (67 aa). 3 N-linked (GlcNAc...) asparagine glycosylation sites follow: N64, N102, and N128. 2 LRR repeats span residues 181-202 and 205-226; these read CLKH…AFKT and SLET…LLRT. One can recognise an LRRCT domain in the interval 237–280; sequence NALTCSCTNLWLRSVDVAADRSEMTCSTRDGVSKMKMTQFKCEP. Residues N288 and N374 are each glycosylated (N-linked (GlcNAc...) asparagine). A helical transmembrane segment spans residues 420-440; that stretch reads VILPVVGVVILLISAVFIIYL. Over 441–794 the chain is Cytoplasmic; it reads CQRAKHRSHA…GDPVYIDIIA (354 aa). Positions 504–775 constitute a Protein kinase domain; sequence ILLMRVIGEG…PQDRLTMKDI (272 aa). Residues 510–518 and K538 each bind ATP; that span reads IGEGAFGRV. D647 serves as the catalytic Proton acceptor. Y673, Y677, Y678, and Y789 each carry phosphotyrosine; by autocatalysis.

Belongs to the protein kinase superfamily. Tyr protein kinase family. Insulin receptor subfamily. In terms of tissue distribution, expression is confined to the central nervous system and its associated endocrine tissues.

Its subcellular location is the membrane. It carries out the reaction L-tyrosyl-[protein] + ATP = O-phospho-L-tyrosyl-[protein] + ADP + H(+). May bind an endogenous invertebrate neurotrophin. Binds human NT-3, but not NGF or BDNF. This is Putative neurotrophin receptor LTRK 1 from Lymnaea stagnalis (Great pond snail).